Consider the following 78-residue polypeptide: Probable [Fe-S]-dependent transcriptional repressor (78 aa).

Residues cysteine 56, cysteine 61, cysteine 64, and cysteine 70 each coordinate iron-sulfur cluster.

It belongs to the FeoC family.

In terms of biological role, may function as a transcriptional regulator that controls feoABC expression. This is Probable [Fe-S]-dependent transcriptional repressor from Escherichia coli (strain UTI89 / UPEC).